The following is a 437-amino-acid chain: Na(+)/H(+) antiporter NhaA (437 aa).

The next 11 membrane-spanning stretches (helical) occupy residues S12–A32, L65–L85, A103–V123, G133–G153, I162–F182, H186–G206, I214–S234, G308–S328, V333–I353, I377–L397, and L412–V432.

This sequence belongs to the NhaA Na(+)/H(+) (TC 2.A.33) antiporter family.

Its subcellular location is the cell inner membrane. It catalyses the reaction Na(+)(in) + 2 H(+)(out) = Na(+)(out) + 2 H(+)(in). Na(+)/H(+) antiporter that extrudes sodium in exchange for external protons. The polypeptide is Na(+)/H(+) antiporter NhaA (Bacteroides fragilis (strain YCH46)).